The primary structure comprises 317 residues: UV DNA damage endonuclease (317 aa).

This sequence belongs to the uve1/UvsE family.

Its function is as follows. Component in a DNA repair pathway. Removal of UV LIGHT damaged nucleotides. Recognizes pyrimidine dimers and cleave a phosphodiester bond immediately 5' to the lesion. The chain is UV DNA damage endonuclease from Bacillus mycoides (strain KBAB4) (Bacillus weihenstephanensis).